Reading from the N-terminus, the 204-residue chain is Cardiotrophin-2 (204 aa).

The first 22 residues, 1–22 (MYCLLATPLCLLSLLLPPLSPA), serve as a signal peptide directing secretion. A glycan (N-linked (GlcNAc...) asparagine) is linked at Asn-44.

This sequence belongs to the IL-6 superfamily. As to quaternary structure, binds to tripartite CNTF receptor complex consisting of CNTF alpha chain, LIFR and IL6ST (in vitro). As to expression, not detected in adult tissues.

The protein resides in the secreted. Its function is as follows. Increases the platelet count associated with splenomegaly. May have an important role in neuronal precursor development and maturation. This chain is Cardiotrophin-2 (Ctf2), found in Mus musculus (Mouse).